Consider the following 471-residue polypeptide: Retinoic acid receptor RXR-beta-A (471 aa).

Residues 1 to 34 (MGDSRDSRSPDSSSVSSPPSGQRSPPLAPSAAAM) form a disordered region. Residues 1-102 (MGDSRDSRSP…HAVSSSDDVK (102 aa)) form a modulating region. Low complexity predominate over residues 10–25 (PDSSSVSSPPSGQRSP). A DNA-binding region (nuclear receptor) is located at residues 122-197 (KRLCAICGDR…MGMKREVVQD (76 aa)). NR C4-type zinc fingers lie at residues 125 to 145 (CAICGDRSSGKHYGVYSCEGC) and 161 to 185 (CRDNKDCLVDKRQRNRCQYCRYQKC). Positions 196 to 216 (QDERQRSVQEERQRNKERDGE) are enriched in basic and acidic residues. The tract at residues 196–226 (QDERQRSVQEERQRNKERDGEVESSSAANEE) is disordered. The interval 198-221 (ERQRSVQEERQRNKERDGEVESSS) is hinge. Positions 224-467 (NEEMPVEKIL…TFLMEMLEAP (244 aa)) constitute an NR LBD domain.

Belongs to the nuclear hormone receptor family. NR2 subfamily. As to quaternary structure, homodimer. Heterodimer; with a rar molecule. Binds DNA preferentially as a rar/rxr heterodimer. Heterodimerizes with rarga. In terms of tissue distribution, shows uniform expression from the blastula to mid-gastrula stages. At 12 hours post-fertilization (hpf), expressed ubiquitously but more weakly. At 24 hpf, restricted to the ventral diencephalon, pharangeal endoderm and trunk and tail mesoderm; mesoderm expression is in medial cells of each somite along the dorsoventral axis, forming stripes. At 48 hpf, expressed in forebrain, eye, midbrain and anterior hindbrain.

The protein localises to the nucleus. In terms of biological role, receptor for retinoic acid. Retinoic acid receptors bind as heterodimers to their target response elements in response to their ligands, all-trans or 9-cis retinoic acid, and regulate gene expression in various biological processes. The rar/rxr heterodimers bind to the retinoic acid response elements (RARE) composed of tandem 5'-AGGTCA-3' sites known as DR1-DR5. The high affinity ligand for rxrs is 9-cis retinoic acid. This Danio rerio (Zebrafish) protein is Retinoic acid receptor RXR-beta-A (rxrba).